A 306-amino-acid polypeptide reads, in one-letter code: MELVFLGTGAGVPSRGRNVTSIALSMLNERKTIWLFDCGEATQHQIMRSQIKLSKLEKIFITHMHGDHIFGLPGLLSSRSFQGGDSTITIYGPAGIAEYVETSLRLSGTRLTYKIIFNEIEPGLIFEDKMFSVIADDLEHGVRSFGYRIVEKDKQGALNAEKLKAEGIEAGPIFQKLKNGEVVELEDGRVVDGKNYIGEPQKGKIISIFGDTKETASELELALNADILVHEATFEGDKGKMAGEYMHSTTLQAANLAKKANVKKLILTHISSRYDRDASKALLIEAKSVFENTEIAYDLAVFEVGE.

The Zn(2+) site is built by His63, His65, Asp67, His68, His140, Asp211, and His269. Residue Asp67 is the Proton acceptor of the active site.

Belongs to the RNase Z family. In terms of assembly, homodimer. The cofactor is Zn(2+).

The catalysed reaction is Endonucleolytic cleavage of RNA, removing extra 3' nucleotides from tRNA precursor, generating 3' termini of tRNAs. A 3'-hydroxy group is left at the tRNA terminus and a 5'-phosphoryl group is left at the trailer molecule.. Zinc phosphodiesterase, which displays some tRNA 3'-processing endonuclease activity. Probably involved in tRNA maturation, by removing a 3'-trailer from precursor tRNA. This chain is Ribonuclease Z, found in Listeria welshimeri serovar 6b (strain ATCC 35897 / DSM 20650 / CCUG 15529 / CIP 8149 / NCTC 11857 / SLCC 5334 / V8).